A 290-amino-acid polypeptide reads, in one-letter code: Probable transcriptional regulatory protein HAH1 (290 aa).

The protein belongs to the TACO1 family.

It localises to the mitochondrion. The chain is Probable transcriptional regulatory protein HAH1 from Saccharomyces cerevisiae (strain ATCC 204508 / S288c) (Baker's yeast).